The sequence spans 105 residues: Thioredoxin (105 aa).

The 104-residue stretch at 2–105 (VKLIESKEAF…KLEASITEYA (104 aa)) folds into the Thioredoxin domain. Lys3 carries the post-translational modification N6-acetyllysine. At Lys8 the chain carries N6-succinyllysine. Catalysis depends on nucleophile residues Cys32 and Cys35. Cys32 and Cys35 are disulfide-bonded. Lys39 is modified (N6-acetyllysine). 2 positions are modified to S-nitrosocysteine: Cys62 and Cys69. S-nitrosocysteine; alternate is present on Cys73. Lys94 carries the N6-acetyllysine; alternate modification. N6-succinyllysine; alternate is present on Lys94.

This sequence belongs to the thioredoxin family. In terms of assembly, homodimer; disulfide-linked. Interacts with TXNIP through the redox-active site. Interacts with MAP3K5 and CASP3. Interacts with APEX1; the interaction stimulates the FOS/JUN AP-1 DNA-binding activity in a redox-dependent manner. Post-translationally, in the fully reduced protein, both Cys-69 and Cys-73 are nitrosylated in response to nitric oxide (NO). When two disulfide bonds are present in the protein, only Cys-73 is nitrosylated. Cys-73 can serve as donor for nitrosylation of target proteins.

It is found in the nucleus. Its subcellular location is the cytoplasm. It localises to the secreted. Functionally, participates in various redox reactions through the reversible oxidation of its active center dithiol to a disulfide and catalyzes dithiol-disulfide exchange reactions. Plays a role in the reversible S-nitrosylation of cysteine residues in target proteins, and thereby contributes to the response to intracellular nitric oxide. Nitrosylates the active site Cys of CASP3 in response to nitric oxide (NO), and thereby inhibits caspase-3 activity. Induces the FOS/JUN AP-1 DNA binding activity in ionizing radiation (IR) cells through its oxidation/reduction status and stimulates AP-1 transcriptional activity. Its function is as follows. ADF augments the expression of the interleukin-2 receptor TAC (IL2R/P55). The polypeptide is Thioredoxin (Txn) (Mus musculus (Mouse)).